The primary structure comprises 446 residues: Tubulin beta-6 chain (446 aa).

Positions 1-4 (MREI) match the MREI motif motif. GTP contacts are provided by Gln11, Glu69, Ser138, Gly142, Thr143, Gly144, Asn204, and Asn226. A Mg(2+)-binding site is contributed by Glu69. Residues 419–446 (VSEYQQYQDATADVEEYEEAEASPEKET) are disordered. A compositionally biased stretch (acidic residues) spans 430-440 (ADVEEYEEAEA).

This sequence belongs to the tubulin family. As to quaternary structure, dimer of alpha and beta chains. A typical microtubule is a hollow water-filled tube with an outer diameter of 25 nm and an inner diameter of 15 nM. Alpha-beta heterodimers associate head-to-tail to form protofilaments running lengthwise along the microtubule wall with the beta-tubulin subunit facing the microtubule plus end conferring a structural polarity. Microtubules usually have 13 protofilaments but different protofilament numbers can be found in some organisms and specialized cells. Mg(2+) is required as a cofactor. Some glutamate residues at the C-terminus are polyglycylated, resulting in polyglycine chains on the gamma-carboxyl group. Glycylation is mainly limited to tubulin incorporated into axonemes (cilia and flagella) whereas glutamylation is prevalent in neuronal cells, centrioles, axonemes, and the mitotic spindle. Both modifications can coexist on the same protein on adjacent residues, and lowering polyglycylation levels increases polyglutamylation, and reciprocally. The precise function of polyglycylation is still unclear. Post-translationally, some glutamate residues at the C-terminus are polyglutamylated, resulting in polyglutamate chains on the gamma-carboxyl group. Polyglutamylation plays a key role in microtubule severing by spastin (SPAST). SPAST preferentially recognizes and acts on microtubules decorated with short polyglutamate tails: severing activity by SPAST increases as the number of glutamates per tubulin rises from one to eight, but decreases beyond this glutamylation threshold. In terms of tissue distribution, highly expressed in bone marrow.

Its subcellular location is the cytoplasm. It localises to the cytoskeleton. Functionally, tubulin is the major constituent of microtubules, a cylinder consisting of laterally associated linear protofilaments composed of alpha- and beta-tubulin heterodimers. Microtubules grow by the addition of GTP-tubulin dimers to the microtubule end, where a stabilizing cap forms. Below the cap, tubulin dimers are in GDP-bound state, owing to GTPase activity of alpha-tubulin. The chain is Tubulin beta-6 chain from Gallus gallus (Chicken).